Consider the following 303-residue polypeptide: Methionyl-tRNA formyltransferase (303 aa).

108 to 111 (SDLP) provides a ligand contact to (6S)-5,6,7,8-tetrahydrofolate.

Belongs to the Fmt family.

It catalyses the reaction L-methionyl-tRNA(fMet) + (6R)-10-formyltetrahydrofolate = N-formyl-L-methionyl-tRNA(fMet) + (6S)-5,6,7,8-tetrahydrofolate + H(+). In terms of biological role, attaches a formyl group to the free amino group of methionyl-tRNA(fMet). The formyl group appears to play a dual role in the initiator identity of N-formylmethionyl-tRNA by promoting its recognition by IF2 and preventing the misappropriation of this tRNA by the elongation apparatus. The protein is Methionyl-tRNA formyltransferase of Rickettsia felis (strain ATCC VR-1525 / URRWXCal2) (Rickettsia azadi).